Here is a 1021-residue protein sequence, read N- to C-terminus: Disease resistance protein Pikm2-TS (1021 aa).

Residues 1 to 182 (MELVVGASEA…PQIIGIKEPV (182 aa)) form a structured coiled coil (CC) domain region. Residues 186 to 519 (TVMEELEVWL…WIAEGFANEK (334 aa)) form the NB-ARC domain. Residues 297–317 (PENDGNPDNTPIRLQETTDDD) are disordered. 3 LRR repeats span residues 612-634 (LAQV…SFNY), 659-682 (MLLL…IQKL), and 683-705 (EYLE…IVQL). The tract at residues 719-751 (RKGLRLPQEKSKKPIKNPSPQGKTKEPAKKGFL) is disordered. LRR repeat units follow at residues 785–807 (LTGL…TFKQ), 817–841 (SCGL…DMPA), 843–865 (PRYL…ITSI), 866–888 (TTLN…ILHI), 912–935 (KDIL…GFKS), and 957–981 (MPAL…ILEN).

The protein belongs to the disease resistance NB-LRR family. Constitutively expressed.

Disease resistance (R) protein. Resistance proteins guard the plant against pathogens that contain an appropriate avirulence protein via an indirect interaction with this avirulence protein. That triggers a defense system including the hypersensitive response, which restricts the pathogen growth. Contribution of Pikm-1 is required to recognize the effector avirulence protein AVR-Pik. The protein is Disease resistance protein Pikm2-TS of Oryza sativa subsp. japonica (Rice).